Here is a 364-residue protein sequence, read N- to C-terminus: UDP-N-acetylglucosamine--N-acetylmuramyl-(pentapeptide) pyrophosphoryl-undecaprenol N-acetylglucosamine transferase (364 aa).

Residues Thr-12 to Gly-14, Asn-124, Arg-167, Ser-195, Ile-249, Ala-268 to Glu-273, and Gln-294 contribute to the UDP-N-acetyl-alpha-D-glucosamine site.

It belongs to the glycosyltransferase 28 family. MurG subfamily.

It localises to the cell inner membrane. The enzyme catalyses di-trans,octa-cis-undecaprenyl diphospho-N-acetyl-alpha-D-muramoyl-L-alanyl-D-glutamyl-meso-2,6-diaminopimeloyl-D-alanyl-D-alanine + UDP-N-acetyl-alpha-D-glucosamine = di-trans,octa-cis-undecaprenyl diphospho-[N-acetyl-alpha-D-glucosaminyl-(1-&gt;4)]-N-acetyl-alpha-D-muramoyl-L-alanyl-D-glutamyl-meso-2,6-diaminopimeloyl-D-alanyl-D-alanine + UDP + H(+). It participates in cell wall biogenesis; peptidoglycan biosynthesis. Its function is as follows. Cell wall formation. Catalyzes the transfer of a GlcNAc subunit on undecaprenyl-pyrophosphoryl-MurNAc-pentapeptide (lipid intermediate I) to form undecaprenyl-pyrophosphoryl-MurNAc-(pentapeptide)GlcNAc (lipid intermediate II). In Alteromonas mediterranea (strain DSM 17117 / CIP 110805 / LMG 28347 / Deep ecotype), this protein is UDP-N-acetylglucosamine--N-acetylmuramyl-(pentapeptide) pyrophosphoryl-undecaprenol N-acetylglucosamine transferase.